A 297-amino-acid polypeptide reads, in one-letter code: Polyhedral envelope protein (297 aa).

This sequence belongs to the baculoviridae PE family.

It is found in the virion membrane. Its function is as follows. Major component of the polyhedra envelope. This is Polyhedral envelope protein from Orgyia pseudotsugata (Douglas-fir tussock moth).